Reading from the N-terminus, the 193-residue chain is Bcl-2-binding component 3 (193 aa).

2 disordered regions span residues 1–31 (MARARQEGSSPEPVEGLARDSPRPFPLGRLM) and 71–131 (ALGG…VEEE). Serine 10 carries the post-translational modification Phosphoserine. The BH3 signature appears at 137 to 151 (IGAQLRRMADDLNAQ).

It belongs to the Bcl-2 family. As to quaternary structure, interacts with MCL1 and BCL2A1. Interacts with BCL2 and BCL2L1/BCL-XL. Interacts (via BH3 domain) with NOL3 (via CARD domain); this interaction prevents BBC3 association with BCL2 and results in CASP8 activation.

The protein localises to the mitochondrion. In terms of biological role, essential mediator of p53/TP53-dependent and p53/TP53-independent apoptosis. Promotes partial unfolding of BCL2L1 and dissociation of BCL2L1 from p53/TP53, releasing the bound p53/TP53 to induce apoptosis. Regulates ER stress-induced neuronal apoptosis. The protein is Bcl-2-binding component 3 (Bbc3) of Mus musculus (Mouse).